Reading from the N-terminus, the 43-residue chain is Metallothionein-3 (43 aa).

This sequence belongs to the metallothionein superfamily. Type 5 family.

In terms of biological role, this protein binds cations of several transition elements. Thought to be involved in metal ion homeostasis. The sequence is that of Metallothionein-3 (MtnC) from Drosophila melanogaster (Fruit fly).